Reading from the N-terminus, the 333-residue chain is MSGDEMIFDPTMSKKKKKKKKPFMLDEEGDTQTEETQPSETKEVEPEPTEDKDLEADEEDTRKKDASDDLDDLNFFNQKKKKKKTKKIFDIDEAEEGVKDLKIESDVQEPTEPEDDLDIMLGNKKKKKKNVKFPDEDEILEKDEALEDEDNKKDDGISFSNQTGPAWAGSERDYTYEELLNRVFNIMREKNPDMVAGEKRKFVMKPPQVVRVGTKKTSFVNFTDICKLLHRQPKHLLAFLLAELGTSGSIDGNNQLVIKGRFQQKQIENVLRRYIKEYVTCHTCRSPDTILQKDTRLYFLQCETCHSRCSAASIKTGFQAVTGKRAQLRAKAN.

Disordered stretches follow at residues 1 to 119 (MSGD…DLDI) and 139 to 164 (ILEKDEALEDEDNKKDDGISFSNQTG). Ser2 is subject to N-acetylserine. Phosphoserine occurs at positions 2 and 13. A compositionally biased stretch (basic residues) spans 13–22 (SKKKKKKKKP). Thr31 and Thr36 each carry phosphothreonine. Residues 40 to 51 (ETKEVEPEPTED) show a composition bias toward basic and acidic residues. At Ser67 the chain carries Phosphoserine. The span at 96 to 105 (EGVKDLKIES) shows a compositional bias: basic and acidic residues. A Glycyl lysine isopeptide (Lys-Gly) (interchain with G-Cter in SUMO2) cross-link involves residue Lys102. Ser105 is modified (phosphoserine). Composition is skewed to acidic residues over residues 106-118 (DVQEPTEPEDDLD) and 139-149 (ILEKDEALEDE). Thr111 carries the post-translational modification Phosphothreonine. A phosphoserine mark is found at Ser158 and Ser218. N6-acetyllysine is present on residues Lys265 and Lys293. The C4-type zinc-finger motif lies at 281–305 (CHTCRSPDTILQKDTRLYFLQCETC).

The protein belongs to the eIF-2-beta/eIF-5 family. Eukaryotic translation initiation factor 2 eIF2 is a heterotrimeric complex composed of an alpha (EIF2S1), a beta (EIF2S2) and a gamma (EIF2S3) chain. eIF2 is member of the 43S pre-initiation complex (43S PIC). eIF2 forms a complex with at least CELF1/CUGBP1, CALR, CALR3, EIF2S1, EIF2S2, HSP90B1 and HSPA5. Interacts with BZW2/5MP1. Interacts with EIF5.

It localises to the cytoplasm. It is found in the cytosol. Functionally, component of the eIF2 complex that functions in the early steps of protein synthesis by forming a ternary complex with GTP and initiator tRNA. This complex binds to a 40S ribosomal subunit, followed by mRNA binding to form the 43S pre-initiation complex (43S PIC). Junction of the 60S ribosomal subunit to form the 80S initiation complex is preceded by hydrolysis of the GTP bound to eIF2 and release of an eIF2-GDP binary complex. In order for eIF2 to recycle and catalyze another round of initiation, the GDP bound to eIF2 must exchange with GTP by way of a reaction catalyzed by eIF2B. The polypeptide is Eukaryotic translation initiation factor 2 subunit 2 (EIF2S2) (Pongo abelii (Sumatran orangutan)).